Reading from the N-terminus, the 39-residue chain is Natriuretic peptide TNPc (39 aa).

Cysteines 9 and 25 form a disulfide.

The protein belongs to the natriuretic peptide family. Expressed by the venom gland.

The protein localises to the secreted. Snake venom natriuretic peptide that exhibits vasoactive and hypotensive activity. Produces a near complete relaxation in pre-contracted aortae by activating the natriuretic peptide receptor 1 (NPR1). Stimulates cGMP production through the natriuretic peptide receptor 1 (NPR1) with high potencies for the rat NPR1 (EC(50)=100 nM), and very weak potencies over human NPR1 (28% activation at 10 uM). In vivo, reduces both systolic and diastolic blood pressure with no effect on heart rate, when intravenously injected in conscious rabbits. Also enhances the bradycardia due to cardiac afferent stimulation (Bezold-Jarisch reflex). The protein is Natriuretic peptide TNPc of Oxyuranus microlepidotus (Inland taipan).